Here is a 287-residue protein sequence, read N- to C-terminus: Aromatic amino acid exporter YddG (287 aa).

At 1-5 (MSRSS) the chain is on the cytoplasmic side. The chain crosses the membrane as a helical span at residues 6–24 (ATLIGFTAILLWSTLALAT). The EamA 1 domain occupies 7-136 (TLIGFTAILL…MGLAGTVVLL (130 aa)). At 25 to 31 (SSTGAVP) the chain is on the periplasmic side. The chain crosses the membrane as a helical span at residues 32-54 (PFLLTALTFTIGGAVGIAAGLAR). At 55 to 65 (GVGLSVLRQPW) the chain is on the cytoplasmic side. Residues 66 to 86 (PVWVHGIGGLFGYHFFYFSAL) traverse the membrane as a helical segment. Over 87–90 (KLAP) the chain is Periplasmic. A helical membrane pass occupies residues 91-111 (PAEAGLVAYLWPLLIVLFSAF). At 112 to 118 (LPGERLR) the chain is on the cytoplasmic side. Residues 119-139 (PAHVAGALMGLAGTVVLLGAR) form a helical membrane-spanning segment. Topologically, residues 140-149 (AGGFGFAPEY) are periplasmic. A helical membrane pass occupies residues 150–170 (VPGYLAAAACAVIWSVYSVAS). The EamA 2 domain occupies 151-281 (PGYLAAAACA…ALIVGGAAVA (131 aa)). The Cytoplasmic portion of the chain corresponds to 171-176 (RRFARV). Residues 177–198 (PTEVVAGFCLATAALSALCHIL) form a helical membrane-spanning segment. Over 199–208 (FEPSVWPVGS) the chain is Periplasmic. Residues 209-233 (EWLAVVALGIGPVGIAFYTWDIGMK) traverse the membrane as a helical segment. Over 234 to 236 (RGD) the chain is Cytoplasmic. Residues 237–258 (VRLLGVLSYAAPVLSTLLLVVA) form a helical membrane-spanning segment. The Periplasmic segment spans residues 259 to 264 (GFAAPS). Residues 265 to 284 (GALAIACALIVGGAAVATLL) form a helical membrane-spanning segment. The Cytoplasmic segment spans residues 285 to 287 (ARR).

It belongs to the drug/metabolite transporter (DMT) superfamily. Aromatic amino acid/paraquat exporter (ArAA/P-E) (TC 2.A.7.17) family.

The protein localises to the cell inner membrane. The catalysed reaction is L-threonine(in) = L-threonine(out). It carries out the reaction L-methionine(in) = L-methionine(out). It catalyses the reaction L-lysine(in) = L-lysine(out). The enzyme catalyses L-glutamate(out) = L-glutamate(in). Its function is as follows. Amino acid transporter with broad substrate specificity. Can transport various amino acids, including L-threonine, L-methionine, L-lysine and L-glutamate. The chain is Aromatic amino acid exporter YddG from Ancylobacter novellus (strain ATCC 8093 / DSM 506 / JCM 20403 / CCM 1077 / IAM 12100 / NBRC 12443 / NCIMB 10456) (Starkeya novella).